Consider the following 216-residue polypeptide: Thymidylate kinase (216 aa).

10 to 17 (GVDGSGKT) is a binding site for ATP.

It belongs to the thymidylate kinase family.

The enzyme catalyses dTMP + ATP = dTDP + ADP. In terms of biological role, phosphorylation of dTMP to form dTDP in both de novo and salvage pathways of dTTP synthesis. The chain is Thymidylate kinase from Pelotomaculum thermopropionicum (strain DSM 13744 / JCM 10971 / SI).